The chain runs to 711 residues: Probable cyclic nucleotide-gated ion channel 10 (711 aa).

At 1-81 the chain is on the cytoplasmic side; it reads MAFSHDNRVR…QDSFLQNWNK (81 aa). The chain crosses the membrane as a helical span at residues 82–102; sequence IFLFACVVALAIDPLFFYIPI. Over 103 to 116 the chain is Extracellular; sequence VDSARHCLTLDSKL. Residues 117–137 traverse the membrane as a helical segment; it reads EIAASLLRTLIDAFYIIHIVF. Over 138-170 the chain is Cytoplasmic; it reads QFRTAYIAPSSRVFGRGELVDDAKAIALKYLSS. A helical transmembrane segment spans residues 171–191; that stretch reads YFIIDLLSILPLPQIVVLAVI. Over 192–204 the chain is Extracellular; it reads PSVNQPVSLLTKD. Residues 205 to 225 form a helical membrane-spanning segment; sequence YLKFSIIAQYVPRILRMYPLY. Residues 226-243 lie on the Cytoplasmic side of the membrane; the sequence is TEVTRTSGIVTETAWAGA. A helical transmembrane segment spans residues 244–264; it reads AWNLSLYMLASHVFGALWYLI. At 265–366 the chain is on the extracellular side; it reads SVEREDRCWQ…GQNLQTSKFV (102 aa). A helical membrane pass occupies residues 367–387; sequence GEIIFAISICISGLVLFALLI. Residues 388–711 lie on the Cytoplasmic side of the membrane; that stretch reads GNMQKYLEST…DFTANHTTDP (324 aa). A nucleoside 3',5'-cyclic phosphate contacts are provided by residues 473-603 and glutamate 544; that span reads LFEI…TFRF. Positions 589-604 are calmodulin-binding; sequence FRRLHSKQLQHTFRFY. An IQ domain is found at 609–638; the sequence is RTWSVSFIQAAWRRYCRRKLAKSLRDEEDR. The interval 689 to 711 is disordered; sequence YTLPLLPQKPTEPDFTANHTTDP.

This sequence belongs to the cyclic nucleotide-gated cation channel (TC 1.A.1.5) family. In terms of assembly, homotetramer or heterotetramer.

Its subcellular location is the cell membrane. In terms of biological role, probable cyclic nucleotide-gated ion channel. This Arabidopsis thaliana (Mouse-ear cress) protein is Probable cyclic nucleotide-gated ion channel 10 (CNGC10).